The following is a 651-amino-acid chain: Acetyl-coenzyme A synthetase (651 aa).

CoA-binding positions include 193-196, T313, and N337; that span reads RAGR. ATP contacts are provided by residues 389-391, 413-418, D502, and R517; these read GEP and DTWWQT. CoA is bound at residue S525. R528 serves as a coordination point for ATP. Residues V539, H541, and V544 each coordinate Mg(2+). R586 contributes to the CoA binding site. K611 bears the N6-acetyllysine mark.

This sequence belongs to the ATP-dependent AMP-binding enzyme family. It depends on Mg(2+) as a cofactor. Acetylated. Deacetylation by the SIR2-homolog deacetylase activates the enzyme.

It catalyses the reaction acetate + ATP + CoA = acetyl-CoA + AMP + diphosphate. Its function is as follows. Catalyzes the conversion of acetate into acetyl-CoA (AcCoA), an essential intermediate at the junction of anabolic and catabolic pathways. AcsA undergoes a two-step reaction. In the first half reaction, AcsA combines acetate with ATP to form acetyl-adenylate (AcAMP) intermediate. In the second half reaction, it can then transfer the acetyl group from AcAMP to the sulfhydryl group of CoA, forming the product AcCoA. The sequence is that of Acetyl-coenzyme A synthetase from Shewanella denitrificans (strain OS217 / ATCC BAA-1090 / DSM 15013).